The following is a 503-amino-acid chain: Maturase K (503 aa).

The protein belongs to the intron maturase 2 family. MatK subfamily.

It is found in the plastid. Its subcellular location is the chloroplast. In terms of biological role, usually encoded in the trnK tRNA gene intron. Probably assists in splicing its own and other chloroplast group II introns. The chain is Maturase K from Vicia faba (Broad bean).